The primary structure comprises 79 residues: Defensin-like protein 272 (79 aa).

The signal sequence occupies residues 1–24 (MSSKIKFVALLIVVISLLLNNAQS). Disulfide bonds link Cys-34–Cys-77, Cys-43–Cys-63, Cys-49–Cys-75, and Cys-53–Cys-76.

Belongs to the DEFL family.

The protein localises to the secreted. This Arabidopsis thaliana (Mouse-ear cress) protein is Defensin-like protein 272.